A 487-amino-acid polypeptide reads, in one-letter code: 3-octaprenyl-4-hydroxybenzoate carboxy-lyase (487 aa).

Residue Asn-172 coordinates Mn(2+). Residues 175 to 177, 189 to 191, and 194 to 195 each bind prenylated FMN; these read IYR, RWL, and RG. Glu-238 lines the Mn(2+) pocket. Asp-287 (proton donor) is an active-site residue.

This sequence belongs to the UbiD family. In terms of assembly, homohexamer. The cofactor is prenylated FMN. It depends on Mn(2+) as a cofactor.

Its subcellular location is the cell membrane. The catalysed reaction is a 4-hydroxy-3-(all-trans-polyprenyl)benzoate + H(+) = a 2-(all-trans-polyprenyl)phenol + CO2. It functions in the pathway cofactor biosynthesis; ubiquinone biosynthesis. In terms of biological role, catalyzes the decarboxylation of 3-octaprenyl-4-hydroxy benzoate to 2-octaprenylphenol, an intermediate step in ubiquinone biosynthesis. This chain is 3-octaprenyl-4-hydroxybenzoate carboxy-lyase, found in Nitrosospira multiformis (strain ATCC 25196 / NCIMB 11849 / C 71).